The following is a 116-amino-acid chain: MASKGKKPLRRTTTRRRKRSHFKNPSPPCSINSDVTSTSSTSTSPTSTATPSPVSAESGCCTPEKSRIPEMLTCPPAPKKQKVAQNCALRRRQIAFFAPPDVELFFVFALGQQNNK.

Positions 1–22 (MASKGKKPLRRTTTRRRKRSHF) are enriched in basic residues. A disordered region spans residues 1–62 (MASKGKKPLR…PVSAESGCCT (62 aa)). The segment covering 35–56 (VTSTSSTSTSPTSTATPSPVSA) has biased composition (low complexity).

Functionally, probable cyclin-dependent protein kinase (CDK) inhibitor that functions as a repressor of mitosis in the endoreduplication cell cycle. This Arabidopsis thaliana (Mouse-ear cress) protein is Cyclin-dependent protein kinase inhibitor SMR9.